The following is a 345-amino-acid chain: Adenine deaminase (345 aa).

Residues His-20, His-22, and His-204 each coordinate Zn(2+). The Proton donor role is filled by Glu-207. Zn(2+) is bound at residue Asp-285. Position 286 (Asp-286) interacts with substrate.

The protein belongs to the metallo-dependent hydrolases superfamily. Adenosine and AMP deaminases family. Adenine deaminase type 2 subfamily. The cofactor is Zn(2+).

The enzyme catalyses adenine + H2O + H(+) = hypoxanthine + NH4(+). Its function is as follows. Catalyzes the hydrolytic deamination of adenine to hypoxanthine. Plays an important role in the purine salvage pathway and in nitrogen catabolism. The sequence is that of Adenine deaminase from Ralstonia nicotianae (strain ATCC BAA-1114 / GMI1000) (Ralstonia solanacearum).